The primary structure comprises 1462 residues: FYVE, RhoGEF and PH domain-containing protein 5 (1462 aa).

Disordered stretches follow at residues 37 to 323 (GRLP…SAEE), 492 to 512 (YVPE…APGI), 592 to 613 (SGSF…SSMV), 670 to 718 (HVDV…ASES), 746 to 777 (EDRS…YENI), and 851 to 887 (CPIS…THKV). Residues 72–82 (PLREDEPKDEG) are compositionally biased toward basic and acidic residues. Acidic residues-rich tracts occupy residues 95–106 (SAEEEEEREEGG) and 137–151 (EGTD…EGCA). Over residues 161–177 (SRSEEEEKLVQPHRECS) the composition is skewed to basic and acidic residues. 2 stretches are compositionally biased toward acidic residues: residues 211–220 (GEAEEDDEEG) and 242–255 (MGQD…EPPE). The segment covering 592 to 611 (SGSFSQRNHLPSSGTSTPSS) has biased composition (polar residues). Over residues 676 to 685 (SSSRSSSESS) the composition is skewed to low complexity. The span at 858 to 887 (PKEDLTSDEEQRSSEEEDSASRDPSVTHKV) shows a compositional bias: basic and acidic residues. The DH domain maps to 892–1084 (RALVIAQELL…SKVTDRANDS (193 aa)). The region spanning 1113-1207 (EFLKEGTLMK…WYGCLSRALP (95 aa)) is the PH 1 domain. An FYVE-type zinc finger spans residues 1242 to 1301 (VTHVMMCMNCGCDFSLTLRRHHCHACGKIVCRNCSRNKYPLKYLKDRMAKVCDGCFGELK). Zn(2+) contacts are provided by Cys1248, Cys1251, Cys1264, Cys1267, Cys1272, Cys1275, Cys1293, and Cys1296. The region spanning 1363–1461 (GSAISGYLSR…WIEAMEDASV (99 aa)) is the PH 2 domain.

In terms of tissue distribution, expressed in endothelial cells (at protein level).

Its subcellular location is the cytoplasm. The protein resides in the cytoskeleton. It localises to the cell projection. The protein localises to the ruffle membrane. It is found in the endoplasmic reticulum. Its subcellular location is the golgi apparatus. The protein resides in the early endosome. Activates CDC42, a member of the Ras-like family of Rho- and Rac proteins, by exchanging bound GDP for free GTP. Mediates VEGF-induced CDC42 activation. May regulate proangiogenic action of VEGF in vascular endothelial cells, including network formation, directional movement and proliferation. May play a role in regulating the actin cytoskeleton and cell shape. This Homo sapiens (Human) protein is FYVE, RhoGEF and PH domain-containing protein 5 (FGD5).